The primary structure comprises 484 residues: Phosphomevalonate kinase erg8 (484 aa).

The tract at residues 54–77 is disordered; it reads REAASGSAHGRSDTPQAEGNVHGD. 184–194 lines the ATP pocket; that stretch reads AHKTGLGSSAA.

Belongs to the GHMP kinase family. Mevalonate kinase subfamily.

The enzyme catalyses (R)-5-phosphomevalonate + ATP = (R)-5-diphosphomevalonate + ADP. The protein operates within isoprenoid biosynthesis; isopentenyl diphosphate biosynthesis via mevalonate pathway; isopentenyl diphosphate from (R)-mevalonate: step 2/3. Functionally, phosphomevalonate kinase; part of the second module of ergosterol biosynthesis pathway that includes the middle steps of the pathway. Erg8 converts 5-phosphomevalonate to 5-diphosphomevalonate. The second module is carried out in the vacuole and involves the formation of farnesyl diphosphate, which is also an important intermediate in the biosynthesis of ubiquinone, dolichol, heme and prenylated proteins. Activity by the mevalonate kinase erg12 (AFUA_4G07780) first converts mevalonate into 5-phosphomevalonate. 5-phosphomevalonate is then further converted to 5-diphosphomevalonate by the phosphomevalonate kinase erg8 (AFUA_5G10680). The diphosphomevalonate decarboxylase mvd1 (AFUA_4G07130) then produces isopentenyl diphosphate. The isopentenyl-diphosphate delta-isomerase idi1 (AFUA_6G11160) then catalyzes the 1,3-allylic rearrangement of the homoallylic substrate isopentenyl (IPP) to its highly electrophilic allylic isomer, dimethylallyl diphosphate (DMAPP). Finally the farnesyl diphosphate synthase erg20 (AFUA_5G02450) catalyzes the sequential condensation of isopentenyl pyrophosphate with dimethylallyl pyrophosphate, and then with the resultant geranylpyrophosphate to the ultimate product farnesyl pyrophosphate. The sequence is that of Phosphomevalonate kinase erg8 from Aspergillus fumigatus (strain ATCC MYA-4609 / CBS 101355 / FGSC A1100 / Af293) (Neosartorya fumigata).